Here is a 653-residue protein sequence, read N- to C-terminus: Mediator of RNA polymerase II transcription subunit 17 (653 aa).

Residues 246 to 271 are disordered; it reads SNESDEHIDSTTGHDIPGTSEKLSAS.

This sequence belongs to the Mediator complex subunit 17 family. As to quaternary structure, component of the Mediator complex.

The protein localises to the nucleus. In terms of biological role, component of the Mediator complex, a coactivator involved in the regulated transcription of nearly all RNA polymerase II-dependent genes. Mediator functions as a bridge to convey information from gene-specific regulatory proteins to the basal RNA polymerase II transcription machinery. The Mediator complex, having a compact conformation in its free form, is recruited to promoters by direct interactions with regulatory proteins and serves for the assembly of a functional preinitiation complex with RNA polymerase II and the general transcription factors. This is Mediator of RNA polymerase II transcription subunit 17 (MED17) from Arabidopsis thaliana (Mouse-ear cress).